The primary structure comprises 202 residues: ATP-dependent Clp protease proteolytic subunit (202 aa).

The Nucleophile role is filled by S106. The active site involves H131.

The protein belongs to the peptidase S14 family. Fourteen ClpP subunits assemble into 2 heptameric rings which stack back to back to give a disk-like structure with a central cavity, resembling the structure of eukaryotic proteasomes.

Its subcellular location is the cytoplasm. It catalyses the reaction Hydrolysis of proteins to small peptides in the presence of ATP and magnesium. alpha-casein is the usual test substrate. In the absence of ATP, only oligopeptides shorter than five residues are hydrolyzed (such as succinyl-Leu-Tyr-|-NHMec, and Leu-Tyr-Leu-|-Tyr-Trp, in which cleavage of the -Tyr-|-Leu- and -Tyr-|-Trp bonds also occurs).. Functionally, cleaves peptides in various proteins in a process that requires ATP hydrolysis. Has a chymotrypsin-like activity. Plays a major role in the degradation of misfolded proteins. The sequence is that of ATP-dependent Clp protease proteolytic subunit from Variovorax paradoxus (strain S110).